A 359-amino-acid chain; its full sequence is MGTIQVDLGNRSYPIYIASAILDKIGTYLSEQPLGKKVLLVTDQQVAPLYAPRVIESLKNAGFKVAVAEIPAGEPSKTLEQASRLYDLAFDHALDRQSSVIALGGGVVGDLAGFVAATYMRGVPFIQIPTTLLAQVDSSVGGKVAVNHSRGKNMIGAFYQPQMVMIDVATLQTLPERELKAGLAEVIKYGVIWDGSFFTWLEKNYSRILNLDTTALEQVAETCCKIKASVVEQDEREQGCRAILNYGHTVGHAIESLSGYGTYLHGEAVAMGMISAARLALNEGILSQQDFERIYRLISAVGLPTELPRGLGPQDIIDSMYHDKKTVLGKLVFVLPRSLGQVDIFKDVKEADILAVLSQ.

NAD(+)-binding positions include 106–110, 130–131, Lys-143, Lys-152, and 170–173; these read GVVGD, TT, and TLQT. Glu-185, His-248, and His-265 together coordinate Zn(2+).

The protein belongs to the sugar phosphate cyclases superfamily. Dehydroquinate synthase family. It depends on Co(2+) as a cofactor. Zn(2+) serves as cofactor. Requires NAD(+) as cofactor.

The protein localises to the cytoplasm. It catalyses the reaction 7-phospho-2-dehydro-3-deoxy-D-arabino-heptonate = 3-dehydroquinate + phosphate. The protein operates within metabolic intermediate biosynthesis; chorismate biosynthesis; chorismate from D-erythrose 4-phosphate and phosphoenolpyruvate: step 2/7. Its function is as follows. Catalyzes the conversion of 3-deoxy-D-arabino-heptulosonate 7-phosphate (DAHP) to dehydroquinate (DHQ). In Desulforamulus reducens (strain ATCC BAA-1160 / DSM 100696 / MI-1) (Desulfotomaculum reducens), this protein is 3-dehydroquinate synthase.